The chain runs to 417 residues: Serine hydroxymethyltransferase (417 aa).

The residue at position 54 (Lys54) is an N6-acetyllysine. Residues Leu121 and 125–127 each bind (6S)-5,6,7,8-tetrahydrofolate; that span reads GHL. Lys229 carries the post-translational modification N6-(pyridoxal phosphate)lysine. An N6-acetyllysine mark is found at Lys250, Lys285, and Lys354. 355 to 357 contacts (6S)-5,6,7,8-tetrahydrofolate; the sequence is SPF. Lys375 is subject to N6-acetyllysine.

The protein belongs to the SHMT family. In terms of assembly, homodimer. Pyridoxal 5'-phosphate is required as a cofactor.

Its subcellular location is the cytoplasm. It catalyses the reaction (6R)-5,10-methylene-5,6,7,8-tetrahydrofolate + glycine + H2O = (6S)-5,6,7,8-tetrahydrofolate + L-serine. The protein operates within one-carbon metabolism; tetrahydrofolate interconversion. It functions in the pathway amino-acid biosynthesis; glycine biosynthesis; glycine from L-serine: step 1/1. In terms of biological role, catalyzes the reversible interconversion of serine and glycine with tetrahydrofolate (THF) serving as the one-carbon carrier. This reaction serves as the major source of one-carbon groups required for the biosynthesis of purines, thymidylate, methionine, and other important biomolecules. Also exhibits THF-independent aldolase activity toward beta-hydroxyamino acids, producing glycine and aldehydes, via a retro-aldol mechanism. In Shigella dysenteriae serotype 1 (strain Sd197), this protein is Serine hydroxymethyltransferase.